The chain runs to 107 residues: Acidic phospholipase A2 2 (107 aa).

Disulfide bonds link Cys26-Cys100, Cys28-Cys38, Cys37-Cys82, Cys43-Cys107, Cys44-Cys75, and Cys62-Cys73. Residues Tyr27, Gly29, and Gly31 each contribute to the Ca(2+) site. Residue His41 is part of the active site. Asp42 contacts Ca(2+). Asp76 is an active-site residue.

It depends on Ca(2+) as a cofactor. Expressed by the venom gland.

The protein localises to the secreted. It carries out the reaction a 1,2-diacyl-sn-glycero-3-phosphocholine + H2O = a 1-acyl-sn-glycero-3-phosphocholine + a fatty acid + H(+). Its function is as follows. PLA2 catalyzes the calcium-dependent hydrolysis of the 2-acyl groups in 3-sn-phosphoglycerides. The polypeptide is Acidic phospholipase A2 2 (Bothrops insularis (Golden lancehead)).